Consider the following 494-residue polypeptide: MNDAAPQNPGQDEAKGTGEKDNGGSMSPRSALRTTAGVAGAGLGLSALGTGTASASVPEAAQTAVPAAESDESAAPKRQGRTMAGVPFERRSTVRVGIIGLGNRGGSMIDLFLAVPGVRVVALCDTVRDKAASAAAKVVKAGQPAPAVYTKDEHDYEQLCARGDVDFVYVATPWDFHFEMAKTAMLNGKHVGVECPVAMRLDELWKLVDLSERTRRHCMQLENCAYGKNEMRVLRMAHAGLFGDLLHGAGAYNHDLRGLMFDPDYYEGPWRRLWHTRLRGDLYPNHGFGPVANYLDINRGDRAVSITSMGTPALGLAQYREENMPPGDASWKETYVSSDRTISLVQTAKGRVVRLEHDVSTPHPYSRINSLGGTRGVFEDYPERIYIEPDHANDEWGDFAAYADWDHWLWKEHANPPGGHGGMDYIMVFRLMQCVRLGLVPDFDVYDAATWTAPVPLSHASIKANGKPQQIPDFTRGEWKKSRPGTDSEKPSEP.

Disordered stretches follow at residues Met-1 to Thr-35 and Glu-59 to Val-86. The segment at residues Met-1–Ala-55 is a signal peptide (tat-type signal). The segment covering Asp-12–Asn-22 has biased composition (basic and acidic residues). NAD(+)-binding positions include Asn-103–Arg-104, Asp-125, Trp-174–His-177, Glu-194–Cys-195, and Asn-223. Residues Tyr-252, Arg-271, Tyr-283–His-286, and Tyr-365 each bind substrate. Tyr-283 contributes to the NAD(+) binding site. Residues Lys-463 to Pro-494 form a disordered region. Positions Thr-475–Pro-494 are enriched in basic and acidic residues.

It belongs to the Gfo/Idh/MocA family. Glycosyl hydrolase 109 subfamily. NAD(+) is required as a cofactor. Predicted to be exported by the Tat system. The position of the signal peptide cleavage has not been experimentally proven.

Its function is as follows. Glycosidase. The sequence is that of Glycosyl hydrolase family 109 protein from Streptomyces niveus (Streptomyces spheroides).